The chain runs to 271 residues: NH(3)-dependent NAD(+) synthetase (271 aa).

43–50 is a binding site for ATP; the sequence is GISGGQDS. Asp49 serves as a coordination point for Mg(2+). A deamido-NAD(+)-binding site is contributed by Arg137. Thr157 serves as a coordination point for ATP. Glu162 is a Mg(2+) binding site. Deamido-NAD(+) is bound by residues Lys170 and Asp177. Residues Lys186 and Thr208 each contribute to the ATP site. 257–258 is a deamido-NAD(+) binding site; it reads HK.

This sequence belongs to the NAD synthetase family. Homodimer.

The enzyme catalyses deamido-NAD(+) + NH4(+) + ATP = AMP + diphosphate + NAD(+) + H(+). It participates in cofactor biosynthesis; NAD(+) biosynthesis; NAD(+) from deamido-NAD(+) (ammonia route): step 1/1. Functionally, catalyzes the ATP-dependent amidation of deamido-NAD to form NAD. Uses ammonia as a nitrogen source. The chain is NH(3)-dependent NAD(+) synthetase from Exiguobacterium sp. (strain ATCC BAA-1283 / AT1b).